The primary structure comprises 1430 residues: Target of rapamycin complex 2 subunit TSC11 (1430 aa).

Positions 1-62 are disordered; the sequence is MSIPHSAKQS…TITNESSKRN (62 aa). Polar residues-rich tracts occupy residues 7 to 26 and 35 to 44; these read AKQS…TTPL and NSSTQISSAK. A Phosphoserine modification is found at Ser19. Residues 45–57 are compositionally biased toward low complexity; the sequence is NITSSSPSTITNE. Ser81, Ser84, Ser87, and Ser141 each carry phosphoserine. Residues 91–180 are a coiled coil; the sequence is ARRTRSTMTK…EKHIFDLKQQ (90 aa). The tract at residues 182–285 is disordered; that stretch reads DKKRQRSLTT…NLTGDTEKDL (104 aa). The segment covering 233 to 265 has biased composition (polar residues); the sequence is TTPTSGTERNSQQNLNRNSTVNSRNNENHSTLS. One can recognise an N-terminal Ras-GEF domain in the interval 995–1100; sequence SVVAVADQAL…FQQKSRLPLH (106 aa).

Belongs to the RICTOR family. As to quaternary structure, the target of rapamycin complex 2 (TORC2) is composed of at least AVO1, AVO2, BIT61, LST8, TOR2 and TSC11. TORC2 forms a homodimer. Contrary to TORC1, TORC2 does not bind to and is not sensitive to FKBP-rapamycin. TSC11 binds to the N-terminal HEAT repeat region in TOR2 and is required for TORC2 integrity by tethering AVO1 and AVO2 to the complex. Phosphorylated by TOR2; when part of TORC2.

The protein localises to the cell membrane. The protein resides in the vacuole membrane. Essential component of TORC2, which regulates cell cycle-dependent polarization of the actin-cytoskeleton and cell wall integrity. TORC2 controls polarity of the actin cytoskeleton, which is required for orienting the secretory pathway toward discrete growth sites, via the RHO1/PKC1/MAPK cell integrity pathway. TSC11 may exert its functions through two distinct mechanisms, one mediated by AVO1 and the other mediated by AVO2 and SLM1. The polypeptide is Target of rapamycin complex 2 subunit TSC11 (TSC11) (Saccharomyces cerevisiae (strain ATCC 204508 / S288c) (Baker's yeast)).